Consider the following 144-residue polypeptide: 3-hydroxyacyl-[acyl-carrier-protein] dehydratase FabZ (144 aa).

His48 is a catalytic residue.

It belongs to the thioester dehydratase family. FabZ subfamily.

The protein resides in the cytoplasm. The catalysed reaction is a (3R)-hydroxyacyl-[ACP] = a (2E)-enoyl-[ACP] + H2O. Functionally, involved in unsaturated fatty acids biosynthesis. Catalyzes the dehydration of short chain beta-hydroxyacyl-ACPs and long chain saturated and unsaturated beta-hydroxyacyl-ACPs. The sequence is that of 3-hydroxyacyl-[acyl-carrier-protein] dehydratase FabZ from Bacillus anthracis (strain A0248).